The chain runs to 263 residues: Dihydromethanophenazine:CoB--CoM heterodisulfide reductase subunit E (263 aa).

5 helical membrane passes run 18 to 38 (TFVQ…YGLI), 108 to 128 (VMHL…GMMF), 150 to 170 (FLSI…LVAL), 184 to 204 (IMYD…GFIA), and 221 to 241 (VAPP…IAFI).

The protein belongs to the HdrE family. The dihydromethanophenazine:CoB--CoM heterodisulfide reductase is composed of two subunits; HdrD and HdrE. The cofactor is heme b.

It localises to the cell membrane. The catalysed reaction is methanophenazine + coenzyme B + coenzyme M = dihydromethanophenazine + coenzyme M-coenzyme B heterodisulfide. It participates in cofactor metabolism; coenzyme M-coenzyme B heterodisulfide reduction; coenzyme B and coenzyme M from coenzyme M-coenzyme B heterodisulfide: step 1/1. Functionally, part of a complex that catalyzes the reversible reduction of CoM-S-S-CoB to the thiol-coenzymes H-S-CoM (coenzyme M) and H-S-CoB (coenzyme B). HdrE may be responsible for anchoring the complex to the membrane. The polypeptide is Dihydromethanophenazine:CoB--CoM heterodisulfide reductase subunit E (hdrE) (Methanosarcina barkeri (strain Fusaro / DSM 804)).